Reading from the N-terminus, the 335-residue chain is NADH-quinone oxidoreductase subunit H (335 aa).

A run of 8 helical transmembrane segments spans residues 15–35, 81–101, 114–134, 154–174, 187–207, 238–258, 270–290, and 307–327; these read VVKA…LSFV, MIFT…FSII, IGLL…LFAG, VSYE…VGSF, LWFI…GVAV, FFVG…TLFF, QVPF…FILL, and WKFC…IVLY.

It belongs to the complex I subunit 1 family. NDH-1 is composed of 13 different subunits. Subunits NuoA, H, J, K, L, M, N constitute the membrane sector of the complex.

The protein resides in the cell inner membrane. The catalysed reaction is a quinone + NADH + 5 H(+)(in) = a quinol + NAD(+) + 4 H(+)(out). NDH-1 shuttles electrons from NADH, via FMN and iron-sulfur (Fe-S) centers, to quinones in the respiratory chain. The immediate electron acceptor for the enzyme in this species is believed to be ubiquinone. Couples the redox reaction to proton translocation (for every two electrons transferred, four hydrogen ions are translocated across the cytoplasmic membrane), and thus conserves the redox energy in a proton gradient. This subunit may bind ubiquinone. This is NADH-quinone oxidoreductase subunit H from Pseudomonas putida (strain GB-1).